The sequence spans 484 residues: MGAYSFRVIIVGGSITGMTLAHCLDRAGIDYVILEKHKDIFAEPGISIGLMPNGSRILEQLGIYSDVHALFEGIKKIYQYMPDGYCIETDSPVNIVDRFGLPFCVIDRYQFLKVLYSKFEDKSRFHMNKKVTSICHGKSDVSVTTADGETYHGDLVVGADGVHSVVRSEMWRIGNLARPGFVTEREKSELAAEFACVFGVAKAVPGQGRWEHILRYNEDFCFMFFPASGTDVFFNVIYKLNQKYVYPDIPRFTKEEGIEVCESVGDFPVWEDVKFRDIWAQRIAFTCVPLEEHMFKNWHHRRIICVGDSVSKMSPNMGQGGNTAIESAAALTNGLRKLVTSNYPDKPSERQLSNTLETFNRNQFKRLNTVHGDARYVTRLEALDGTLKRVFARYVMGHCGDLLVGNLARIVAGGGVLDFIPLTARSGKDWPPCPWQHSWGISESIDFCKKFAVASLIVLIVVLARALDSPAGLSSGIRSSSWSF.

A signal peptide spans 1-21 (MGAYSFRVIIVGGSITGMTLA). The FAD site is built by E35, G49, and R108. Y216 is an active-site residue. The FAD site is built by D308 and G321. Residues 451 to 471 (FAVASLIVLIVVLARALDSPA) traverse the membrane as a helical segment.

The protein belongs to the paxM FAD-dependent monooxygenase family. Requires FAD as cofactor.

The protein localises to the membrane. Its pathway is polyketide biosynthesis. Functionally, FAD-dependent monooxygenase; part of the gene cluster that mediates the biosynthesis of aurovertins, fungal polyketides that exhibit potent inhibition of adenosine triphosphate synthase. Tha biosynthesis starts with the HR-PKS aurA that selects propionate as the starter unit; synthesizes a hexa-ene chain through the repeated functions of the KR and DH domains in the first six iterations; selectively introduces three alpha-methyl substitutions at C4, C6, and C16 using the S-adensylmethionine-dependent cMET; and shuts off KR and DH in the last three iterations to afford a 1,3,5-triketo portion that can undergo intramolecular cyclization to yield the alpha-pyrone intermediate. AurE may act as a cyclase and enhances the rate of pyrone formation and product release of aurA. The methyltransferase aurB then methylates the C17 hydroxyl group. C17 methylation is required to initiate epoxidation by the downstream monooxygenase aurC. The monooxygenase aurC and the epoxide hydrolase aurD can iteratively transform the terminal triene portion of the methylated precursor into the dioxabicyclo[3.2.1]octane scaffold of aurovertin E. Epoxidation modifications of the precursor occur in two separate steps; bis-epoxidation of the two terminal olefins takes place first, followed by another epoxidation that occurs at C7-C8 after tetrahydrofuran formation. The O-acyltransferase aurG converts aurovertin E to aurovertin A. This Calcarisporium arbuscula (Dendryphion arbuscula) protein is FAD-dependent monooxygenase aurC.